A 186-amino-acid polypeptide reads, in one-letter code: Pyridoxal 5'-phosphate synthase subunit PdxT (186 aa).

An L-glutamine-binding site is contributed by Gly46–Ser48. The Nucleophile role is filled by Cys75. L-glutamine-binding positions include Arg101 and Ile127–Arg128. Residues His164 and Glu166 each act as charge relay system in the active site.

Belongs to the glutaminase PdxT/SNO family. In terms of assembly, in the presence of PdxS, forms a dodecamer of heterodimers. Only shows activity in the heterodimer.

The enzyme catalyses aldehydo-D-ribose 5-phosphate + D-glyceraldehyde 3-phosphate + L-glutamine = pyridoxal 5'-phosphate + L-glutamate + phosphate + 3 H2O + H(+). The catalysed reaction is L-glutamine + H2O = L-glutamate + NH4(+). The protein operates within cofactor biosynthesis; pyridoxal 5'-phosphate biosynthesis. Catalyzes the hydrolysis of glutamine to glutamate and ammonia as part of the biosynthesis of pyridoxal 5'-phosphate. The resulting ammonia molecule is channeled to the active site of PdxS. The polypeptide is Pyridoxal 5'-phosphate synthase subunit PdxT (Methanococcus aeolicus (strain ATCC BAA-1280 / DSM 17508 / OCM 812 / Nankai-3)).